Consider the following 35-residue polypeptide: LNRDDDSDLHSPRYSFSEDTKCDDGWFVGTSRRTK.

The region spanning 1–8 (LNRDDDSD) is the SoHo domain. Residue Ser15 is modified to Phosphoserine. In terms of domain architecture, SH3 spans 22-35 (CDDGWFVGTSRRTK).

In terms of assembly, interacts with the long isoform of AFDN and with VCL. AFDN and VCL bind to SORBS1 in a competitive manner and do not form a ternary complex. Interacts with ABL1, CBL, CBLB and INPPL1/SHIP2 through the third SH3 domain. Interaction with ABL1 occurs only after insulin stimulation while this has no effect on the interaction with INPPL1. Interacts with the insulin receptor but dissociates from it following insulin stimulation. Also interacts with SCA7, PTK2/FAK1 and flotillin. Interacts (via SH3 domain 2) with PXN. Interacts (via third SH3 domain) with the Ten-1 ICD form of TENM1; the interaction induces the translocation of SORBS1 to the nucleus. In terms of processing, O-glycosylated.

It is found in the cell junction. The protein localises to the adherens junction. Its subcellular location is the cell membrane. The protein resides in the cytoplasm. It localises to the cytoskeleton. It is found in the focal adhesion. The protein localises to the nucleus. Its subcellular location is the nucleus matrix. In terms of biological role, plays a role in tyrosine phosphorylation of CBL by linking CBL to the insulin receptor. Required for insulin-stimulated glucose transport. Involved in formation of actin stress fibers and focal adhesions. This is Sorbin and SH3 domain-containing protein 1 from Rattus norvegicus (Rat).